A 337-amino-acid chain; its full sequence is Holliday junction branch migration complex subunit RuvB (337 aa).

The large ATPase domain (RuvB-L) stretch occupies residues 1 to 180; the sequence is MTRLISADKS…FGVISRLEFY (180 aa). ATP-binding positions include leucine 19, arginine 20, glycine 61, lysine 64, threonine 65, threonine 66, 127 to 129, arginine 170, tyrosine 180, and arginine 217; that span reads EDF. Threonine 65 is a Mg(2+) binding site. A small ATPAse domain (RuvB-S) region spans residues 181-251; sequence THEELAFIIT…VADQALALLE (71 aa). The head domain (RuvB-H) stretch occupies residues 254-337; the sequence is DMGFDMMDRA…APEPPQGKLF (84 aa). DNA-binding residues include arginine 309 and arginine 314.

This sequence belongs to the RuvB family. Homohexamer. Forms an RuvA(8)-RuvB(12)-Holliday junction (HJ) complex. HJ DNA is sandwiched between 2 RuvA tetramers; dsDNA enters through RuvA and exits via RuvB. An RuvB hexamer assembles on each DNA strand where it exits the tetramer. Each RuvB hexamer is contacted by two RuvA subunits (via domain III) on 2 adjacent RuvB subunits; this complex drives branch migration. In the full resolvosome a probable DNA-RuvA(4)-RuvB(12)-RuvC(2) complex forms which resolves the HJ.

Its subcellular location is the cytoplasm. It carries out the reaction ATP + H2O = ADP + phosphate + H(+). In terms of biological role, the RuvA-RuvB-RuvC complex processes Holliday junction (HJ) DNA during genetic recombination and DNA repair, while the RuvA-RuvB complex plays an important role in the rescue of blocked DNA replication forks via replication fork reversal (RFR). RuvA specifically binds to HJ cruciform DNA, conferring on it an open structure. The RuvB hexamer acts as an ATP-dependent pump, pulling dsDNA into and through the RuvAB complex. RuvB forms 2 homohexamers on either side of HJ DNA bound by 1 or 2 RuvA tetramers; 4 subunits per hexamer contact DNA at a time. Coordinated motions by a converter formed by DNA-disengaged RuvB subunits stimulates ATP hydrolysis and nucleotide exchange. Immobilization of the converter enables RuvB to convert the ATP-contained energy into a lever motion, pulling 2 nucleotides of DNA out of the RuvA tetramer per ATP hydrolyzed, thus driving DNA branch migration. The RuvB motors rotate together with the DNA substrate, which together with the progressing nucleotide cycle form the mechanistic basis for DNA recombination by continuous HJ branch migration. Branch migration allows RuvC to scan DNA until it finds its consensus sequence, where it cleaves and resolves cruciform DNA. The chain is Holliday junction branch migration complex subunit RuvB from Citrifermentans bemidjiense (strain ATCC BAA-1014 / DSM 16622 / JCM 12645 / Bem) (Geobacter bemidjiensis).